Reading from the N-terminus, the 276-residue chain is MSLWFLVFLSVLQGVTELFPVSSLGHTLLVPALFGMHIDKHAPQLLPFLVALHLGTAFALLWYFRERWIALIAGFFASLNGRKNDEGHLMWALIIGTIPAGLVGLLLEKRIERVFHDLRIVAVALIVNGILLWLGDRIQRARAHRPPEKLTFKQAFFVGLAQVGALIPGFSRSGLTMIAGNAAGLTAEKAAEFSFLLGTPIIFAAGLLELPKLFHAPDQLADALLGGVLTAIAAYLSVRFLMRYFEGRGRLASFGLYCALAGLFCLGWFMFHAQPV.

The next 8 membrane-spanning stretches (helical) occupy residues 1–21 (MSLW…LFPV), 44–64 (QLLP…LWYF), 87–107 (GHLM…GLLL), 114–134 (VFHD…LLWL), 150–170 (LTFK…IPGF), 190–210 (AAEF…LLEL), 222–242 (DALL…RFLM), and 251–271 (LASF…WFMF).

It belongs to the UppP family.

The protein localises to the cell inner membrane. The enzyme catalyses di-trans,octa-cis-undecaprenyl diphosphate + H2O = di-trans,octa-cis-undecaprenyl phosphate + phosphate + H(+). In terms of biological role, catalyzes the dephosphorylation of undecaprenyl diphosphate (UPP). Confers resistance to bacitracin. The chain is Undecaprenyl-diphosphatase 2 from Burkholderia thailandensis (strain ATCC 700388 / DSM 13276 / CCUG 48851 / CIP 106301 / E264).